Consider the following 316-residue polypeptide: Acetylglutamate kinase (316 aa).

Residues glycine 76 to glycine 77, arginine 98, and asparagine 207 contribute to the substrate site.

The protein belongs to the acetylglutamate kinase family. ArgB subfamily.

It localises to the cytoplasm. It carries out the reaction N-acetyl-L-glutamate + ATP = N-acetyl-L-glutamyl 5-phosphate + ADP. It functions in the pathway amino-acid biosynthesis; L-arginine biosynthesis; N(2)-acetyl-L-ornithine from L-glutamate: step 2/4. In terms of biological role, catalyzes the ATP-dependent phosphorylation of N-acetyl-L-glutamate. The protein is Acetylglutamate kinase of Paenarthrobacter aurescens (strain TC1).